The sequence spans 369 residues: Chorismate synthase (369 aa).

NADP(+) contacts are provided by R48 and R54. Residues 125-127 (RSS), 238-239 (NA), G283, 298-302 (KPTSS), and R324 each bind FMN.

The protein belongs to the chorismate synthase family. Homotetramer. FMNH2 serves as cofactor.

It catalyses the reaction 5-O-(1-carboxyvinyl)-3-phosphoshikimate = chorismate + phosphate. The protein operates within metabolic intermediate biosynthesis; chorismate biosynthesis; chorismate from D-erythrose 4-phosphate and phosphoenolpyruvate: step 7/7. Catalyzes the anti-1,4-elimination of the C-3 phosphate and the C-6 proR hydrogen from 5-enolpyruvylshikimate-3-phosphate (EPSP) to yield chorismate, which is the branch point compound that serves as the starting substrate for the three terminal pathways of aromatic amino acid biosynthesis. This reaction introduces a second double bond into the aromatic ring system. The polypeptide is Chorismate synthase (Acidiphilium cryptum (strain JF-5)).